The following is a 1170-amino-acid chain: MANGSDTKPVPKGPRGARADDTRTPPHPDRRGSDRDQYFSKDRSYGGRTDRDYSDYDRAYPPPRDYDRYGGGKYGKYDKYDKYDRYDRLDSHDYPPRRDRDYDRSRDARDTDSRDYGRLPPRDTRPPPRGGREYRYARDERGWDRDRRDLDRDRDRDPRDRERDARDRDRDRDFRDRDHDPRDRDPKGYRPHSLDPLPSRDRDMPPRERERELVRERDLFSRDRDLITGVRELARSPPPPLRDGRNRDRSNDRHDRSFDKHTRDRGTRDRDTKEKGSVISTPQTAPTPRLTPTNGKPDLPTSQPPAPPSPPRLKTFPKEVWETVGRKNNTRLTYDPELSKDKQKGKRGIYEEVKKGASTTEDPRSKHPHYFKTSSKSNKKPYQRLPVPRFLYDANSIAPPPSTQIIVKGLSSLTTSKTITAHFKTYGELEAVNMVEDPATGSSVGACLVRFKVTKNNYEAAHECLKKAIRGQKTGRIDQAKYRVEPDEDGAKAKDIIKRVAARAAKKAMPVKQPPTAPAADKSIMEKLPTPVPSARPSPKAAQLMKTSAYIFIAGKYLPSEKVFASDIRRILRDFGWFDVLKEGDGFYVFFDNNRDTVECYEAMNGRKVNGHQMAMAMIRLSRVAPKTKESEENATEQAPKLPPKEEARKLIVQELANSLRKDIRERVIAAAIVEFLNPARFTHIKQDPEPSAATEPNTVNASAARVDTPEPVQSSSAIPGFLPRFKIKRKGDPTKKKDATKKNRKKISARPMNHVLNDYYSDEEDSTRMSTPIVPDTSADAAELPIRKPRKKISQSKQRIMDFSSSEGSNESEEEEEVEDDMEEEEDETAQEELQEASTLDTSQQLTTAFGEILDWAPAHGFPQPVTADKKGGALTTISGFQALVKDDEDMELLQEALEGIEPEKINGEAWTWTHKHLNEAVAKENAEFPELAAPNAFVNSTGSWKSQGYFKIPEAAKSEYLPHRKKLNIPIDTLQMENREKKKENASNSRVNRANNRRLVADINMQKQLLSTETDVLNFNQLRKRKKPVKFARSAIHNWGLYAIEPIAANEMIIEYVGEVVRQEIADLREARYMRSGIGSSYLFRVDESTVVDATKRGGIARFINHCCTPSCTAKIIKVEGQKRIVIYASRDIAANEELTYDYKFEKEIGEERIPCLCGAPGCKGYLN.

The interval M1–Y382 is disordered. 3 stretches are compositionally biased toward basic and acidic residues: residues A17 to G188, P198 to L226, and R242 to G276. Polar residues predominate over residues V278–N294. The span at S302 to P311 shows a compositional bias: pro residues. 2 stretches are compositionally biased toward basic and acidic residues: residues F316 to G325 and E337 to S365. An RRM domain is found at T403 to D489. Disordered regions lie at residues A625–E646 and Q687–T843. A compositionally biased stretch (basic and acidic residues) spans K731 to K742. Residues N811–Q836 show a composition bias toward acidic residues. The RxxxRR motif signature appears at R995–R1000. An SET domain is found at K1029 to K1146. Residue Y1145 participates in S-adenosyl-L-methionine binding. In terms of domain architecture, Post-SET spans E1154–N1170.

This sequence belongs to the class V-like SAM-binding methyltransferase superfamily. As to quaternary structure, component of the Set1C/COMPASS complex.

It localises to the nucleus. The protein resides in the chromosome. The enzyme catalyses L-lysyl(4)-[histone H3] + 3 S-adenosyl-L-methionine = N(6),N(6),N(6)-trimethyl-L-lysyl(4)-[histone H3] + 3 S-adenosyl-L-homocysteine + 3 H(+). The catalysed reaction is N(6)-methyl-L-lysyl(4)-[histone H3] + S-adenosyl-L-methionine = N(6),N(6)-dimethyl-L-lysyl(4)-[histone H3] + S-adenosyl-L-homocysteine + H(+). It carries out the reaction N(6),N(6)-dimethyl-L-lysyl(4)-[histone H3] + S-adenosyl-L-methionine = N(6),N(6),N(6)-trimethyl-L-lysyl(4)-[histone H3] + S-adenosyl-L-homocysteine + H(+). Functionally, catalytic component of the COMPASS (Set1C) complex that specifically mono-, di- and trimethylates histone H3 to form H3K4me1/2/3. Binds RNAs which might negatively affect its histone methyltransferase activity. COMPASS recognizes ubiquitinated H2B on one face of the nucleosome which stimulates the methylation of H3 on the opposing face. The polypeptide is Histone-lysine N-methyltransferase, H3 lysine-4 specific (SET1) (Yarrowia lipolytica (strain CLIB 122 / E 150) (Yeast)).